Reading from the N-terminus, the 425-residue chain is MPYVDRQNRICGFLDIEEHENSGKFLRRYFILDTQANCLLWYMDNPQNLAMGAGAVGALQLTYISKVSIATPKQKPKTPFCFVINALSQRYFLQANDQKDMKDWVEALNQASKITVPKGGGLPMTTEVLKSLAAPPALEKKPQVAYKTEIIGGVVVHTPISQNGGDGQEGSEPGSHTILRRSQSYIPTSGCRASTGPPLIKSGYCVKQGNVRKSWKRRFFALDDFTICYFKCEQDREPLRTIFLKDVLKTHECLVKSGDLLMRDNLFEIITSSRTFYVQADSPEDMHSWIKEIGAAVQALKCHPRETSFSRSISLTRPGSSSLSSGPNSILCRGRPPLEEKKALCKAPSVASSWQPWTPVPQAGEKLLPPGDTSEDSLFTPRPGEGSAPGVLPSSRIRHRSEPQHPKEKPFMFNLDDENIRTSDV.

The PH 1 domain maps to 7 to 113; sequence QNRICGFLDI…WVEALNQASK (107 aa). Lys-141 participates in a covalent cross-link: Glycyl lysine isopeptide (Lys-Gly) (interchain with G-Cter in SUMO2). Ser-184 carries the phosphoserine modification. A PH 2 domain is found at 198–298; it reads PLIKSGYCVK…WIKEIGAAVQ (101 aa). Over residues 312-330 the composition is skewed to low complexity; the sequence is SISLTRPGSSSLSSGPNSI. The segment at 312 to 332 is disordered; that stretch reads SISLTRPGSSSLSSGPNSILC. 2 positions are modified to phosphoserine: Ser-314 and Ser-349. Residues 352–425 form a disordered region; sequence SSWQPWTPVP…DDENIRTSDV (74 aa). The segment covering 400-410 has biased composition (basic and acidic residues); that stretch reads RSEPQHPKEKP.

Binds MPDZ and PTPN13. Highly expressed in heart, kidney, spleen and peripheral blood leukocytes. Detected at lower levels in brain, skeletal muscle, colon, thymus, liver, small intestine, placenta and lung.

The protein localises to the cytoplasm. The protein resides in the cell membrane. It is found in the nucleus. In terms of biological role, binds specifically to phosphatidylinositol 3,4-diphosphate (PtdIns3,4P2), but not to other phosphoinositides. May recruit other proteins to the plasma membrane. This Homo sapiens (Human) protein is Pleckstrin homology domain-containing family A member 2 (PLEKHA2).